Reading from the N-terminus, the 61-residue chain is Small ribosomal subunit protein uS14 (61 aa).

Zn(2+) is bound by residues C24, C27, C40, and C43.

Belongs to the universal ribosomal protein uS14 family. Zinc-binding uS14 subfamily. Part of the 30S ribosomal subunit. Contacts proteins S3 and S10. Zn(2+) serves as cofactor.

Its function is as follows. Binds 16S rRNA, required for the assembly of 30S particles and may also be responsible for determining the conformation of the 16S rRNA at the A site. This is Small ribosomal subunit protein uS14 from Spiroplasma citri.